A 246-amino-acid polypeptide reads, in one-letter code: Probable transcriptional regulatory protein CLB_3102 (246 aa).

This sequence belongs to the TACO1 family.

The protein resides in the cytoplasm. In Clostridium botulinum (strain ATCC 19397 / Type A), this protein is Probable transcriptional regulatory protein CLB_3102.